The following is a 452-amino-acid chain: tRNA modification GTPase MnmE (452 aa).

Residues R21, E78, and K118 each contribute to the (6S)-5-formyl-5,6,7,8-tetrahydrofolate site. A TrmE-type G domain is found at 214–375; that stretch reads GMKVVIAGRP…LREHLKKSMG (162 aa). N224 provides a ligand contact to K(+). GTP contacts are provided by residues 224-229, 243-249, and 268-271; these read NAGKSS, TNIAGTT, and DTAG. S228 serves as a coordination point for Mg(2+). K(+)-binding residues include T243, I245, and T248. Position 249 (T249) interacts with Mg(2+). A (6S)-5-formyl-5,6,7,8-tetrahydrofolate-binding site is contributed by K452.

It belongs to the TRAFAC class TrmE-Era-EngA-EngB-Septin-like GTPase superfamily. TrmE GTPase family. In terms of assembly, homodimer. Heterotetramer of two MnmE and two MnmG subunits. K(+) serves as cofactor.

It localises to the cytoplasm. Exhibits a very high intrinsic GTPase hydrolysis rate. Involved in the addition of a carboxymethylaminomethyl (cmnm) group at the wobble position (U34) of certain tRNAs, forming tRNA-cmnm(5)s(2)U34. This chain is tRNA modification GTPase MnmE, found in Actinobacillus pleuropneumoniae serotype 5b (strain L20).